Here is a 182-residue protein sequence, read N- to C-terminus: PRA1 family protein D (182 aa).

At alanine 2 the chain carries N-acetylalanine. 3 helical membrane-spanning segments follow: residues 68–88, 107–127, and 129–149; these read LITR…WFFL, IVAV…GVWL, and ALTT…LRGT. Positions 163–182 are disordered; sequence PMLSTSGGGNDGARGDYSGI.

This sequence belongs to the PRA1 family. Interacts with PRA1F2 and PRA1F3. Interacts with the cauliflower mosaic virus (CaMV) movement protein (via N-terminus). In terms of tissue distribution, expressed in hypocotyls, roots, lateral roots, lateral root caps, columella cells, leaves, shoot apex, stems and flowers.

Its subcellular location is the endosome membrane. May be involved in both secretory and endocytic intracellular trafficking in the endosomal/prevacuolar compartments. This Arabidopsis thaliana (Mouse-ear cress) protein is PRA1 family protein D (PRA1D).